The following is a 247-amino-acid chain: Small ribosomal subunit protein uS2 (247 aa).

This sequence belongs to the universal ribosomal protein uS2 family.

The chain is Small ribosomal subunit protein uS2 from Ralstonia pickettii (strain 12J).